A 362-amino-acid chain; its full sequence is Oxysterol-binding protein 5 (362 aa).

Belongs to the OSBP family.

In Dictyostelium discoideum (Social amoeba), this protein is Oxysterol-binding protein 5 (osbE).